We begin with the raw amino-acid sequence, 131 residues long: Small ribosomal subunit protein uS8 (131 aa).

The protein belongs to the universal ribosomal protein uS8 family. In terms of assembly, part of the 30S ribosomal subunit. Contacts proteins S5 and S12.

Its function is as follows. One of the primary rRNA binding proteins, it binds directly to 16S rRNA central domain where it helps coordinate assembly of the platform of the 30S subunit. The sequence is that of Small ribosomal subunit protein uS8 from Pelodictyon phaeoclathratiforme (strain DSM 5477 / BU-1).